Here is a 426-residue protein sequence, read N- to C-terminus: Histidine--tRNA ligase (426 aa).

This sequence belongs to the class-II aminoacyl-tRNA synthetase family.

The protein localises to the cytoplasm. The enzyme catalyses tRNA(His) + L-histidine + ATP = L-histidyl-tRNA(His) + AMP + diphosphate + H(+). This chain is Histidine--tRNA ligase, found in Saccharolobus solfataricus (strain ATCC 35092 / DSM 1617 / JCM 11322 / P2) (Sulfolobus solfataricus).